The primary structure comprises 562 residues: Dihydroxy-acid dehydratase (562 aa).

A Mg(2+)-binding site is contributed by Asp-80. Cys-121 is a binding site for [2Fe-2S] cluster. Asp-122 and Lys-123 together coordinate Mg(2+). Lys-123 is subject to N6-carboxylysine. Residue Cys-194 participates in [2Fe-2S] cluster binding. Glu-446 contributes to the Mg(2+) binding site. Catalysis depends on Ser-472, which acts as the Proton acceptor.

It belongs to the IlvD/Edd family. Homodimer. [2Fe-2S] cluster is required as a cofactor. Requires Mg(2+) as cofactor.

The enzyme catalyses (2R)-2,3-dihydroxy-3-methylbutanoate = 3-methyl-2-oxobutanoate + H2O. The catalysed reaction is (2R,3R)-2,3-dihydroxy-3-methylpentanoate = (S)-3-methyl-2-oxopentanoate + H2O. It participates in amino-acid biosynthesis; L-isoleucine biosynthesis; L-isoleucine from 2-oxobutanoate: step 3/4. The protein operates within amino-acid biosynthesis; L-valine biosynthesis; L-valine from pyruvate: step 3/4. Functions in the biosynthesis of branched-chain amino acids. Catalyzes the dehydration of (2R,3R)-2,3-dihydroxy-3-methylpentanoate (2,3-dihydroxy-3-methylvalerate) into 2-oxo-3-methylpentanoate (2-oxo-3-methylvalerate) and of (2R)-2,3-dihydroxy-3-methylbutanoate (2,3-dihydroxyisovalerate) into 2-oxo-3-methylbutanoate (2-oxoisovalerate), the penultimate precursor to L-isoleucine and L-valine, respectively. This chain is Dihydroxy-acid dehydratase, found in Staphylococcus aureus (strain COL).